A 950-amino-acid polypeptide reads, in one-letter code: Bifunctional glutamine synthetase adenylyltransferase/adenylyl-removing enzyme (950 aa).

Positions 1-443 (MSLPSPLIPV…VFVTLIGDEE (443 aa)) are adenylyl removase. The interval 450-950 (ERHFNELWDM…WQEWLESSTI (501 aa)) is adenylyl transferase.

The protein belongs to the GlnE family. The cofactor is Mg(2+).

It catalyses the reaction [glutamine synthetase]-O(4)-(5'-adenylyl)-L-tyrosine + phosphate = [glutamine synthetase]-L-tyrosine + ADP. The catalysed reaction is [glutamine synthetase]-L-tyrosine + ATP = [glutamine synthetase]-O(4)-(5'-adenylyl)-L-tyrosine + diphosphate. Functionally, involved in the regulation of glutamine synthetase GlnA, a key enzyme in the process to assimilate ammonia. When cellular nitrogen levels are high, the C-terminal adenylyl transferase (AT) inactivates GlnA by covalent transfer of an adenylyl group from ATP to specific tyrosine residue of GlnA, thus reducing its activity. Conversely, when nitrogen levels are low, the N-terminal adenylyl removase (AR) activates GlnA by removing the adenylyl group by phosphorolysis, increasing its activity. The regulatory region of GlnE binds the signal transduction protein PII (GlnB) which indicates the nitrogen status of the cell. The sequence is that of Bifunctional glutamine synthetase adenylyltransferase/adenylyl-removing enzyme from Vibrio vulnificus (strain CMCP6).